Consider the following 1097-residue polypeptide: Protease Do-like 7 (1097 aa).

A serine protease region spans residues 55–243 (VLRTTACRAF…LPLQRVVRAL (189 aa)). The PDZ domain maps to 269–366 (MTFLHKGFDE…RGGQPLSVSV (98 aa)). His524 acts as the Charge relay system in catalysis. The span at 546-556 (TSSGDGSQNDF) shows a compositional bias: polar residues. The segment at 546–577 (TSSGDGSQNDFGSEAKKQRVDEDSSDGIAANG) is disordered. A compositionally biased stretch (basic and acidic residues) spans 558 to 567 (SEAKKQRVDE). Ser785 acts as the Charge relay system in catalysis.

The protein belongs to the peptidase S1C family.

The protein localises to the cytoplasm. Its function is as follows. Probable serine protease. This is Protease Do-like 7 (DEGP7) from Arabidopsis thaliana (Mouse-ear cress).